Here is a 211-residue protein sequence, read N- to C-terminus: Endonuclease YncB (211 aa).

Residues 1–19 (MKKILISMIAIVLSITLAA) form the signal peptide. Residue cysteine 20 is the site of N-palmitoyl cysteine attachment. Cysteine 20 carries the S-diacylglycerol cysteine lipid modification. The disordered stretch occupies residues 24–63 (HAAKNHSDSNGTEQVSQDTHSNEYNQTEQKAGTPHSKNQK). Over residues 31–53 (DSNGTEQVSQDTHSNEYNQTEQK) the composition is skewed to polar residues. The 134-residue stretch at 64-197 (KLVNVTLDRA…KSDKLSIWSK (134 aa)) folds into the TNase-like domain. Aspartate 77 lines the Ca(2+) pocket. Residue arginine 91 is part of the active site. Ca(2+) is bound by residues aspartate 96 and threonine 97. Residues glutamate 99 and arginine 142 contribute to the active site.

Belongs to the thermonuclease family. Ca(2+) serves as cofactor.

It localises to the cell membrane. With respect to regulation, inhibited by aurintricalboxylic acid but not by Zn(2+). Functionally, shows DNase activity on double strand DNA. The sequence is that of Endonuclease YncB (yncB) from Bacillus subtilis (strain 168).